The following is a 299-amino-acid chain: CRISPR-associated endonuclease Cas1 3 (299 aa).

Mn(2+) is bound by residues Glu-143, His-210, and Asp-223.

The protein belongs to the CRISPR-associated endonuclease Cas1 family. Homodimer, forms a heterotetramer with a Cas2 homodimer. It depends on Mg(2+) as a cofactor. Mn(2+) is required as a cofactor.

Functionally, CRISPR (clustered regularly interspaced short palindromic repeat), is an adaptive immune system that provides protection against mobile genetic elements (viruses, transposable elements and conjugative plasmids). CRISPR clusters contain spacers, sequences complementary to antecedent mobile elements, and target invading nucleic acids. CRISPR clusters are transcribed and processed into CRISPR RNA (crRNA). Acts as a dsDNA endonuclease. Involved in the integration of spacer DNA into the CRISPR cassette. This is CRISPR-associated endonuclease Cas1 3 from Methanospirillum hungatei JF-1 (strain ATCC 27890 / DSM 864 / NBRC 100397 / JF-1).